We begin with the raw amino-acid sequence, 80 residues long: Secreted transmembrane peptide 3 (80 aa).

A signal peptide spans Met-1–Gly-27. Residues Ile-44–Ser-80 are disordered. The short motif at Pro-62–Ser-80 is the SCOOP motif element. Residues Pro-70 to Ser-80 show a composition bias toward basic residues.

The protein belongs to the serine rich endogenous peptide (SCOOP) phytocytokine family. Interacts with MIK2 (via extracellular leucine-rich repeat domain); this interaction triggers the formation of complex between MIK2 and the BAK1/SERK3 and SERK4 coreceptors, and subsequent BAK1 activation by phosphorylation. As to expression, mostly expressed in leaves, and, to a lower extent, in roots, stems, siliques, seeds and flowers.

The protein resides in the cell membrane. It is found in the secreted. Its subcellular location is the extracellular space. The protein localises to the apoplast. It localises to the endoplasmic reticulum. The protein resides in the golgi apparatus. Brassicaceae-specific phytocytokine (plant endogenous peptide released into the apoplast) perceived by MIK2 in a BAK1/SERK3 and SERK4 coreceptors-dependent manner, that modulates various physiological and antimicrobial processes including growth prevention and reactive oxygen species (ROS) response regulation. The protein is Secreted transmembrane peptide 3 of Arabidopsis thaliana (Mouse-ear cress).